Here is a 55-residue protein sequence, read N- to C-terminus: Accessory gland-specific peptide 70A (55 aa).

An N-terminal signal peptide occupies residues 1–19 (MKTLALFLVLVCVLGLVQS). Residues 20-33 (WEWPWNRKPTKFPI) are essential for binding to sperm. Hydroxyproline is present on residues proline 28 and proline 32. Isoleucine 33 bears the Isoleucine derivative mark. Hydroxyproline occurs at positions 34, 36, and 38. Residues 36 to 55 (PNPRDKWCRLNLGPAWGGRC) form a sufficient to induce PMR region. A disulfide bridge links cysteine 43 with cysteine 55.

The protein belongs to the Drosophila sex peptide family. Post-translationally, sperm-bound protein is cleaved to release an active C-terminal peptide. Gradual release from stored sperm may function to prolong PMR and enhance male reproductive success. Main cells of the accessory glands of males (paragonial gland).

Its subcellular location is the secreted. Functionally, male seminal protein which triggers short- and long-term post-mating behavioral responses (PMR) in female Drosophila. Binds initially to sperm where it is later cleaved to release an active peptide within the female reproductive tract. Signals via the sex peptide receptor (SPR) in female flies; may also act via other receptors. Moderates the activity of distinct neuronal circuitries in the female genital tract to promote specific PMRs including: enhanced ovulation, increased egg laying rate, increased feeding/foraging rate, induced antimicrobial peptide synthesis, reduced mating receptivity, reduced day-time sleep and reduced lifespan in multiple mated females. This is Accessory gland-specific peptide 70A (SP) from Drosophila melanogaster (Fruit fly).